The primary structure comprises 474 residues: MAGRTLYDKLWDDHVVSQRDDGSSLIYIDRHIVHEVTSPQAFEGLRIAGRKPWRTDSVIATPDHNVPTTFNERASGVDGIADPISKIQVKTLDDNCDELGIVEFKINDNRQGIVHVVGPETGGCLPGMTIVCGDSHTSTNGALGALSFGIGTSEVEHVLATQCLVAKKMKNMLIKVDGQLGQGVTAKDVVLAIIAKIGTAGGTGFAIEFGGDVFRAMSMEGRLTVCNMAIEAGARAGMVAVDEITLDYVKGRAFAPKGDHWAMAEARWRELHSDADAVFDEVVELDGAQIKPQVSWGTSPEMVLPVDGVIPDPAQESDGVKAAGVARALEYMGLTPGQKITDIAVDRVFIGSCTNSRIEDIRAAAKVVAGKTKAASVKEAIVVPGSGAVKAEAEAEGLDKIFTAANIEWREPGCSMCLAMNADRLGEGEHCASTSNRNFEGRQGYGGRTHLVSPAMAAAAAISGHFVDIRDWQS.

Residues Cys353, Cys414, and Cys417 each coordinate [4Fe-4S] cluster.

Belongs to the aconitase/IPM isomerase family. LeuC type 1 subfamily. In terms of assembly, heterodimer of LeuC and LeuD. [4Fe-4S] cluster is required as a cofactor.

The catalysed reaction is (2R,3S)-3-isopropylmalate = (2S)-2-isopropylmalate. Its pathway is amino-acid biosynthesis; L-leucine biosynthesis; L-leucine from 3-methyl-2-oxobutanoate: step 2/4. Functionally, catalyzes the isomerization between 2-isopropylmalate and 3-isopropylmalate, via the formation of 2-isopropylmaleate. This chain is 3-isopropylmalate dehydratase large subunit, found in Teredinibacter turnerae (strain ATCC 39867 / T7901).